Reading from the N-terminus, the 707-residue chain is SPX domain-containing membrane protein At4g11810 (707 aa).

The SPX domain maps to Val2–Lys145. The next 6 helical transmembrane spans lie at Phe252–Ile272, Leu283–Phe303, Leu320–Phe340, Ser342–Val361, Ala380–Leu400, and Leu416–Phe436. A compositionally biased stretch (acidic residues) spans Glu481–Ser498. Residues Glu481–Lys503 are disordered. The next 5 helical transmembrane spans lie at Leu523–Val543, Ile557–Ile577, Ile586–Ile606, Val614–Leu634, and Met679–Thr699.

It belongs to the major facilitator superfamily.

The protein resides in the membrane. The polypeptide is SPX domain-containing membrane protein At4g11810 (Arabidopsis thaliana (Mouse-ear cress)).